The following is a 449-amino-acid chain: Glucose-6-phosphate isomerase (449 aa).

The Proton donor role is filled by glutamate 291. Residues histidine 312 and lysine 426 contribute to the active site.

It belongs to the GPI family.

It localises to the cytoplasm. It carries out the reaction alpha-D-glucose 6-phosphate = beta-D-fructose 6-phosphate. Its pathway is carbohydrate biosynthesis; gluconeogenesis. It participates in carbohydrate degradation; glycolysis; D-glyceraldehyde 3-phosphate and glycerone phosphate from D-glucose: step 2/4. Catalyzes the reversible isomerization of glucose-6-phosphate to fructose-6-phosphate. This Streptococcus thermophilus (strain CNRZ 1066) protein is Glucose-6-phosphate isomerase.